Consider the following 212-residue polypeptide: Thymidylate kinase (212 aa).

Position 11-18 (11-18 (GPDGAGKS)) interacts with ATP.

It belongs to the thymidylate kinase family.

The catalysed reaction is dTMP + ATP = dTDP + ADP. In terms of biological role, phosphorylation of dTMP to form dTDP in both de novo and salvage pathways of dTTP synthesis. The polypeptide is Thymidylate kinase (Streptococcus gordonii (strain Challis / ATCC 35105 / BCRC 15272 / CH1 / DL1 / V288)).